The chain runs to 600 residues: Alpha pinene synthase, chloroplastic (600 aa).

Residues 1–26 (MSSISMHARPLNISAANNHHPSWDRR) are disordered. The transit peptide at 1–31 (MSSISMHARPLNISAANNHHPSWDRRVSKPR) directs the protein to the chloroplast. Residues aspartate 354, aspartate 358, aspartate 498, and glutamate 506 each coordinate Mg(2+). The DDXXD motif signature appears at 354 to 358 (DDVYD).

The protein belongs to the terpene synthase family. Tpsa subfamily. Mg(2+) is required as a cofactor. The cofactor is Mn(2+). As to expression, barely detectable in leaves.

The protein localises to the plastid. Its subcellular location is the chloroplast. The catalysed reaction is (2E)-geranyl diphosphate = alpha-pinene + diphosphate. The protein operates within secondary metabolite biosynthesis; terpenoid biosynthesis. Functionally, monoterpene synthase involved in the biosynthesis of volatile compounds widely used in aromatherapy and folk medicine, and present in culinary herbs. Mediates the conversion of (2E)-geranyl diphosphate (GPP) into alpha-pinene and, as minor compounds, into alpha-phellandrene, limonene and alpha-terpinolene. This chain is Alpha pinene synthase, chloroplastic, found in Lavandula stoechas (Butterfly lavender).